Consider the following 364-residue polypeptide: MHLRRVRTMPRHSQSLTMAPYSSVSLVEQLEDRILCHEKTTAALVEHAFRIKDDIVSSLQKMQNKGGGDRLARLFLEEHIRNITAIVKQLNRDIEVLQEQIRARDNISYGTNSALKTLEMRQLSGLGDLRGRVARCDASIARLSAEHKTTYEGLQHLNKEQQAAKLILETKIKDAEGQISQLLNRVDLSISEQSTKLKMSHRDSNHQLQLLDTKFKGTVEELSNQILSARSWLQQEQERIEKELLQKIDHLSLIVKENSGASERDMEKKLTQMSARLDKIEESQRRNAEGQRKPEEEKVHGRISKLELQMTEDMKEMKAEVNAGFTAIYESIGSLRQVLEAKMKLDRDQLQKQIQQMQKPESSM.

Residues Ile-80–Ile-107 are a coiled coil. The span at Ala-275–His-300 shows a compositional bias: basic and acidic residues. The interval Ala-275–Gly-301 is disordered.

Belongs to the FAM81 family. In terms of assembly, interacts with DLG4/PSD-95, GRIN2B/GLUN2B and SYNGAP1; the interactions facilitate condensate formation. As to expression, highly expressed in brain (at protein level).

It is found in the postsynaptic density. Its subcellular location is the cytoplasm. Facilitates the interaction and assembly of proteins within the postsynaptic density by promoting the condensation of postsynaptic proteins via liquid-liquid phase separation. Required for neuronal activity. Accumulation at the postsynaptic density results in enlargement of dendritic spines. The polypeptide is Protein FAM81A (Rattus norvegicus (Rat)).